We begin with the raw amino-acid sequence, 156 residues long: Lipoprotein signal peptidase (156 aa).

Helical transmembrane passes span F5–V25, Y64–L84, and I89–G109. Active-site residues include D113 and D130. Residues N122–I142 form a helical membrane-spanning segment.

It belongs to the peptidase A8 family.

Its subcellular location is the cell inner membrane. The catalysed reaction is Release of signal peptides from bacterial membrane prolipoproteins. Hydrolyzes -Xaa-Yaa-Zaa-|-(S,diacylglyceryl)Cys-, in which Xaa is hydrophobic (preferably Leu), and Yaa (Ala or Ser) and Zaa (Gly or Ala) have small, neutral side chains.. The protein operates within protein modification; lipoprotein biosynthesis (signal peptide cleavage). This protein specifically catalyzes the removal of signal peptides from prolipoproteins. The sequence is that of Lipoprotein signal peptidase from Campylobacter jejuni subsp. jejuni serotype O:6 (strain 81116 / NCTC 11828).